The chain runs to 331 residues: Ribosomal RNA small subunit methyltransferase H (331 aa).

S-adenosyl-L-methionine-binding positions include 38 to 40 (GGY), Asp56, Phe83, Asp100, and Gln107. The interval 287-331 (DEAELAENPRARSARLRVGVRTDAPAGKVDPQALGTPLIPKKGRR) is disordered.

Belongs to the methyltransferase superfamily. RsmH family.

It localises to the cytoplasm. It catalyses the reaction cytidine(1402) in 16S rRNA + S-adenosyl-L-methionine = N(4)-methylcytidine(1402) in 16S rRNA + S-adenosyl-L-homocysteine + H(+). In terms of biological role, specifically methylates the N4 position of cytidine in position 1402 (C1402) of 16S rRNA. The sequence is that of Ribosomal RNA small subunit methyltransferase H from Cereibacter sphaeroides (strain ATCC 17023 / DSM 158 / JCM 6121 / CCUG 31486 / LMG 2827 / NBRC 12203 / NCIMB 8253 / ATH 2.4.1.) (Rhodobacter sphaeroides).